Reading from the N-terminus, the 108-residue chain is Nucleoid-associated protein Bcen_6253 (108 aa).

Polar residues predominate over residues 85–95; that stretch reads ATSQEKMSGMT. The interval 85 to 108 is disordered; it reads ATSQEKMSGMTSGLPLPPGFKLPF. The span at 99–108 shows a compositional bias: pro residues; the sequence is PLPPGFKLPF.

Belongs to the YbaB/EbfC family. Homodimer.

It localises to the cytoplasm. The protein resides in the nucleoid. Binds to DNA and alters its conformation. May be involved in regulation of gene expression, nucleoid organization and DNA protection. In Burkholderia orbicola (strain AU 1054), this protein is Nucleoid-associated protein Bcen_6253.